We begin with the raw amino-acid sequence, 286 residues long: Beta-lactamase TEM-12 (286 aa).

Positions methionine 1–alanine 23 are cleaved as a signal peptide. Serine 68 (acyl-ester intermediate) is an active-site residue. The cysteines at positions 75 and 121 are disulfide-linked. Catalysis depends on glutamate 166, which acts as the Proton acceptor. Lysine 232 to glycine 234 serves as a coordination point for substrate.

This sequence belongs to the class-A beta-lactamase family.

It catalyses the reaction a beta-lactam + H2O = a substituted beta-amino acid. Functionally, TEM-type are the most prevalent beta-lactamases in enterobacteria; they hydrolyze the beta-lactam bond in susceptible beta-lactam antibiotics, thus conferring resistance to penicillins and cephalosporins such as ceftazidime. This chain is Beta-lactamase TEM-12 (blaT-12b), found in Klebsiella oxytoca.